We begin with the raw amino-acid sequence, 254 residues long: L-erythrulose-1-phosphate isomerase (254 aa).

His97 acts as the Electrophile in catalysis. Catalysis depends on Glu170, which acts as the Proton acceptor. 2 residues coordinate substrate: Gly176 and Ser213.

The protein belongs to the triosephosphate isomerase family. As to quaternary structure, homodimer.

It localises to the cytoplasm. The enzyme catalyses L-erythrulose 1-phosphate = D-erythrulose 4-phosphate. It functions in the pathway carbohydrate metabolism; erythritol degradation. In terms of biological role, catalyzes the isomerization of D-erythrulose-4P to L-erythrulose-1P. This chain is L-erythrulose-1-phosphate isomerase, found in Mesorhizobium japonicum (strain LMG 29417 / CECT 9101 / MAFF 303099) (Mesorhizobium loti (strain MAFF 303099)).